The sequence spans 184 residues: Probable chemoreceptor glutamine deamidase CheD (184 aa).

The protein belongs to the CheD family.

It carries out the reaction L-glutaminyl-[protein] + H2O = L-glutamyl-[protein] + NH4(+). Its function is as follows. Probably deamidates glutamine residues to glutamate on methyl-accepting chemotaxis receptors (MCPs), playing an important role in chemotaxis. This chain is Probable chemoreceptor glutamine deamidase CheD, found in Rhizobium johnstonii (strain DSM 114642 / LMG 32736 / 3841) (Rhizobium leguminosarum bv. viciae).